The chain runs to 416 residues: Tumor necrosis factor receptor superfamily member 19 (416 aa).

The signal sequence occupies residues 1–29; it reads MALKVLPLHRTVLFAAILFLLHLACKVSC. Topologically, residues 30–170 are extracellular; that stretch reads ETGDCRQQEF…TVSSPRDTAL (141 aa). TNFR-Cys repeat units follow at residues 33–72 and 74–114; these read DCRQ…DAQC and PCRP…DAVC. Disulfide bonds link Cys-34/Cys-46, Cys-49/Cys-62, Cys-52/Cys-72, Cys-75/Cys-89, Cys-92/Cys-106, Cys-95/Cys-114, Cys-117/Cys-135, and Cys-138/Cys-149. A glycan (N-linked (GlcNAc...) asparagine) is linked at Asn-105. A TNFR-Cys 3; truncated repeat occupies 116–149; the sequence is DCLPGFYRKTKLVGFQDMECVPCGDPPPPYEPHC. A helical transmembrane segment spans residues 171–191; that stretch reads AAVICSALATVLLALLILCVI. Over 192 to 416 the chain is Cytoplasmic; it reads YCKRQFMEKK…LAMPTAFQDA (225 aa). The tract at residues 321 to 416 is disordered; that stretch reads LCDSYPELTG…LAMPTAFQDA (96 aa). Composition is skewed to polar residues over residues 331–351, 360–370, and 381–396; these read EDTN…SSGG, LESSGNVSEST, and VWEQ…TPSQ.

In terms of assembly, associates with TRAF1, TRAF2, TRAF3 and TRAF5. Interacts with LINGO1. Highly expressed in adult brain, and in embryos from day 11-17, but not earlier. Detected in embryonic brain and epithelium, and at lower levels in adult heart, lung and liver. In neonatal mice, mainly in hair follicles and neuron-like cells in the cerebellum, but not in the skin epidermis. Isoform 3 was found in embryonic day 17.5 skin but not in brain and liver.

It is found in the cell membrane. Its subcellular location is the secreted. Functionally, can mediate activation of c-Jun and NF-kappa-B. May promote caspase-independent cell death. Isoform 2 and isoform 3 may act as decoy receptors. The polypeptide is Tumor necrosis factor receptor superfamily member 19 (Tnfrsf19) (Mus musculus (Mouse)).